The primary structure comprises 212 residues: Adenylate kinase (212 aa).

10 to 15 (GAGKGT) lines the ATP pocket. Residues 30-59 (STGDMFRAAMANQTEMGVLAKSYIDKGELV) form an NMP region. Residues Thr31, Arg36, 57–59 (ELV), 86–89 (GYPR), and Gln93 each bind AMP. The LID stretch occupies residues 127 to 159 (GRIIHRVTGETFHKVFNPPVDYKEEDYYQREDD). ATP is bound by residues Arg128 and 137–138 (TF). Residues Arg156 and Arg167 each coordinate AMP. Gln195 contacts ATP.

This sequence belongs to the adenylate kinase family. As to quaternary structure, monomer.

The protein localises to the cytoplasm. The catalysed reaction is AMP + ATP = 2 ADP. Its pathway is purine metabolism; AMP biosynthesis via salvage pathway; AMP from ADP: step 1/1. Its function is as follows. Catalyzes the reversible transfer of the terminal phosphate group between ATP and AMP. Plays an important role in cellular energy homeostasis and in adenine nucleotide metabolism. The chain is Adenylate kinase from Streptococcus pneumoniae serotype 4 (strain ATCC BAA-334 / TIGR4).